Here is a 308-residue protein sequence, read N- to C-terminus: Aspartate carbamoyltransferase catalytic subunit (308 aa).

Carbamoyl phosphate contacts are provided by R59 and T60. An L-aspartate-binding site is contributed by K87. 3 residues coordinate carbamoyl phosphate: R109, H137, and Q140. R173 and R224 together coordinate L-aspartate. Residues G267 and P268 each coordinate carbamoyl phosphate.

This sequence belongs to the aspartate/ornithine carbamoyltransferase superfamily. ATCase family. In terms of assembly, heterododecamer (2C3:3R2) of six catalytic PyrB chains organized as two trimers (C3), and six regulatory PyrI chains organized as three dimers (R2).

The enzyme catalyses carbamoyl phosphate + L-aspartate = N-carbamoyl-L-aspartate + phosphate + H(+). It participates in pyrimidine metabolism; UMP biosynthesis via de novo pathway; (S)-dihydroorotate from bicarbonate: step 2/3. Catalyzes the condensation of carbamoyl phosphate and aspartate to form carbamoyl aspartate and inorganic phosphate, the committed step in the de novo pyrimidine nucleotide biosynthesis pathway. The protein is Aspartate carbamoyltransferase catalytic subunit of Helicobacter acinonychis (strain Sheeba).